Reading from the N-terminus, the 249-residue chain is Type III pantothenate kinase (249 aa).

6 to 13 (DIGNSRTK) contributes to the ATP binding site. Residues Tyr-89 and 96 to 99 (GIDR) contribute to the substrate site. The active-site Proton acceptor is Asp-98. Asp-119 contacts K(+). An ATP-binding site is contributed by Thr-122. Residue Thr-174 participates in substrate binding.

Belongs to the type III pantothenate kinase family. Homodimer. The cofactor is NH4(+). K(+) is required as a cofactor.

It localises to the cytoplasm. It catalyses the reaction (R)-pantothenate + ATP = (R)-4'-phosphopantothenate + ADP + H(+). Its pathway is cofactor biosynthesis; coenzyme A biosynthesis; CoA from (R)-pantothenate: step 1/5. Functionally, catalyzes the phosphorylation of pantothenate (Pan), the first step in CoA biosynthesis. In Colwellia psychrerythraea (strain 34H / ATCC BAA-681) (Vibrio psychroerythus), this protein is Type III pantothenate kinase.